We begin with the raw amino-acid sequence, 391 residues long: tRNA(Met) cytidine acetate ligase (391 aa).

Residues 7–20 (IAEY…HIYQ), G101, N153, and R178 each bind ATP.

The protein belongs to the TmcAL family.

Its subcellular location is the cytoplasm. The catalysed reaction is cytidine(34) in elongator tRNA(Met) + acetate + ATP = N(4)-acetylcytidine(34) in elongator tRNA(Met) + AMP + diphosphate. Catalyzes the formation of N(4)-acetylcytidine (ac(4)C) at the wobble position of elongator tRNA(Met), using acetate and ATP as substrates. First activates an acetate ion to form acetyladenylate (Ac-AMP) and then transfers the acetyl group to tRNA to form ac(4)C34. This chain is tRNA(Met) cytidine acetate ligase, found in Latilactobacillus sakei subsp. sakei (strain 23K) (Lactobacillus sakei subsp. sakei).